The following is a 514-amino-acid chain: MIQKRKRTVSFRLVLMCTLLFVSLPITKTSAVNGTLMQYFEWYTPNDGQHWKRLQNDAEHLSDIGITAVWIPPAYKGLSQSDNGYGPYDLYDLGEFQQKGTVRTKYGTKSELQDAIGSLHSRNVQVYGDVVLNHKAGADATEDVTAVEVNPANRNQETSEEYQIKAWTDFRFPGRGNTYSDFKWHWYHFDGADWDESRKISRIFKFRGEGKAWDWEVSSENGNYDYLMYADVDYDHPDVVAETKKWGIWYANELSLDGFRIDAAKHIKFSFLRDWVQAVRQATGKEMFTVAEYWQNNAGKLENYLNKTSFNQSVFDVPLHFNLQAASSQGGGYDMRRLLDGTVVSRHPEKAVTFVENHDTQPGQSLESTVQTWFKPLAYAFILTRESGYPQVFYGDMYGTKGTSPKEIPSLKDNIEPILKARKEYAYGPQHDYIDHPDVIGWTREGDSSAAKSGLAALITDGPGGSKRMYAGLKNAGETWYDITGNRSDTVKIGSDGWGEFHVNDGSVSIYVQK.

Residues 1-31 (MIQKRKRTVSFRLVLMCTLLFVSLPITKTSA) form the signal peptide. Asn-133, Asp-190, Ala-212, Asp-214, Asp-225, Asp-231, Asp-233, and Asp-235 together coordinate Ca(2+). Asp-190 is a binding site for Na(+). The Na(+) site is built by Asp-214, Asp-225, and Asp-231. The Nucleophile role is filled by Asp-262. Position 266 (His-266) interacts with Ca(2+). The active-site Proton donor is the Glu-292. 3 residues coordinate Ca(2+): Gly-331, Asp-438, and Asp-461.

This sequence belongs to the glycosyl hydrolase 13 family. In terms of assembly, monomer. Requires Ca(2+) as cofactor. The cofactor is Na(+).

Its subcellular location is the secreted. The enzyme catalyses Endohydrolysis of (1-&gt;4)-alpha-D-glucosidic linkages in polysaccharides containing three or more (1-&gt;4)-alpha-linked D-glucose units.. This is Alpha-amylase from Bacillus amyloliquefaciens (Bacillus velezensis).